Reading from the N-terminus, the 175-residue chain is Major MR/P fimbria protein (175 aa).

A signal peptide spans 1-23 (MKLNKLALVLGLGLSVVAGSALA). The cysteines at positions 42 and 81 are disulfide-linked.

The protein belongs to the fimbrial protein family.

The protein localises to the fimbrium. Functionally, major structural component of mannose-resistant/proteus-like fimbriae of P.mirabilis. The chain is Major MR/P fimbria protein (mrpA) from Proteus mirabilis (strain HI4320).